Here is a 90-residue protein sequence, read N- to C-terminus: Small ribosomal subunit protein bS20 (90 aa).

Residues 1–11 are compositionally biased toward basic and acidic residues; it reads MANIKSSEKDI. The tract at residues 1–29 is disordered; sequence MANIKSSEKDIRRTKRRNAANSQNRSRLR.

Belongs to the bacterial ribosomal protein bS20 family.

In terms of biological role, binds directly to 16S ribosomal RNA. The polypeptide is Small ribosomal subunit protein bS20 (Leptospira borgpetersenii serovar Hardjo-bovis (strain JB197)).